The primary structure comprises 736 residues: Phosphoribosylformylglycinamidine synthase subunit PurL (736 aa).

Histidine 50 is an active-site residue. The ATP site is built by tyrosine 53 and lysine 92. Glutamate 94 lines the Mg(2+) pocket. Substrate contacts are provided by residues 95–98 (SHNH) and arginine 117. The Proton acceptor role is filled by histidine 96. Mg(2+) is bound at residue aspartate 118. Glutamine 241 contacts substrate. Mg(2+) is bound at residue aspartate 269. 313 to 315 (ESQ) provides a ligand contact to substrate. ATP is bound by residues aspartate 495 and glycine 532. Asparagine 533 is a Mg(2+) binding site. Position 535 (serine 535) interacts with substrate.

Belongs to the FGAMS family. In terms of assembly, monomer. Part of the FGAM synthase complex composed of 1 PurL, 1 PurQ and 2 PurS subunits.

It is found in the cytoplasm. It carries out the reaction N(2)-formyl-N(1)-(5-phospho-beta-D-ribosyl)glycinamide + L-glutamine + ATP + H2O = 2-formamido-N(1)-(5-O-phospho-beta-D-ribosyl)acetamidine + L-glutamate + ADP + phosphate + H(+). It functions in the pathway purine metabolism; IMP biosynthesis via de novo pathway; 5-amino-1-(5-phospho-D-ribosyl)imidazole from N(2)-formyl-N(1)-(5-phospho-D-ribosyl)glycinamide: step 1/2. Functionally, part of the phosphoribosylformylglycinamidine synthase complex involved in the purines biosynthetic pathway. Catalyzes the ATP-dependent conversion of formylglycinamide ribonucleotide (FGAR) and glutamine to yield formylglycinamidine ribonucleotide (FGAM) and glutamate. The FGAM synthase complex is composed of three subunits. PurQ produces an ammonia molecule by converting glutamine to glutamate. PurL transfers the ammonia molecule to FGAR to form FGAM in an ATP-dependent manner. PurS interacts with PurQ and PurL and is thought to assist in the transfer of the ammonia molecule from PurQ to PurL. In Bartonella quintana (strain Toulouse) (Rochalimaea quintana), this protein is Phosphoribosylformylglycinamidine synthase subunit PurL.